Here is a 251-residue protein sequence, read N- to C-terminus: Hydroxyacylglutathione hydrolase (251 aa).

Zn(2+)-binding residues include histidine 53, histidine 55, aspartate 57, histidine 58, histidine 110, aspartate 127, and histidine 165.

The protein belongs to the metallo-beta-lactamase superfamily. Glyoxalase II family. As to quaternary structure, monomer. It depends on Zn(2+) as a cofactor.

It catalyses the reaction an S-(2-hydroxyacyl)glutathione + H2O = a 2-hydroxy carboxylate + glutathione + H(+). The protein operates within secondary metabolite metabolism; methylglyoxal degradation; (R)-lactate from methylglyoxal: step 2/2. In terms of biological role, thiolesterase that catalyzes the hydrolysis of S-D-lactoyl-glutathione to form glutathione and D-lactic acid. The chain is Hydroxyacylglutathione hydrolase from Escherichia coli (strain UTI89 / UPEC).